A 230-amino-acid polypeptide reads, in one-letter code: TPR repeat-containing protein BB_0298 (230 aa).

2 TPR repeats span residues 69-102 and 183-216; these read ARFF…NPNN and FEFL…ASTE.

The polypeptide is TPR repeat-containing protein BB_0298 (Borreliella burgdorferi (strain ATCC 35210 / DSM 4680 / CIP 102532 / B31) (Borrelia burgdorferi)).